A 368-amino-acid chain; its full sequence is Ribosomal RNA large subunit methyltransferase M (368 aa).

S-adenosyl-L-methionine contacts are provided by residues serine 189, 222–225, aspartate 241, aspartate 261, and aspartate 278; that span reads CPGG. Catalysis depends on lysine 307, which acts as the Proton acceptor.

Belongs to the class I-like SAM-binding methyltransferase superfamily. RNA methyltransferase RlmE family. RlmM subfamily. As to quaternary structure, monomer.

The protein resides in the cytoplasm. It carries out the reaction cytidine(2498) in 23S rRNA + S-adenosyl-L-methionine = 2'-O-methylcytidine(2498) in 23S rRNA + S-adenosyl-L-homocysteine + H(+). Its function is as follows. Catalyzes the 2'-O-methylation at nucleotide C2498 in 23S rRNA. This chain is Ribosomal RNA large subunit methyltransferase M, found in Yersinia pestis bv. Antiqua (strain Angola).